Consider the following 214-residue polypeptide: Ribosomal protein uL16-like (214 aa).

This sequence belongs to the universal ribosomal protein uL16 family. In terms of assembly, component of a male germ cell-specific 60S large ribosomal subunit (LSU), which contains RPL10L and RPL39L, instead of RPL10 and RPL39 paralogs. The composition of the rest of the complex is similar to classical ribosomes. In terms of tissue distribution, almost testis-specific. Also expressed in pre- and postmenopausal ovary.

Its subcellular location is the cytoplasm. Testis-specific component of the ribosome, which is required for the transition from prophase to metaphase in male meiosis I. Compensates for the inactivated X-linked RPL10 paralog during spermatogenesis. The ribosome is a large ribonucleoprotein complex responsible for the synthesis of proteins in the cell. The male germ cell-specific ribosome displays a ribosomal polypeptide exit tunnel of distinct size and charge states compared with the classical ribosome. It is responsible for regulating the biosynthesis and folding of a subset of male germ-cell-specific proteins that are essential for the formation of sperm. This Homo sapiens (Human) protein is Ribosomal protein uL16-like.